The following is a 177-amino-acid chain: Large ribosomal subunit protein uL6 (177 aa).

This sequence belongs to the universal ribosomal protein uL6 family. Part of the 50S ribosomal subunit.

This protein binds to the 23S rRNA, and is important in its secondary structure. It is located near the subunit interface in the base of the L7/L12 stalk, and near the tRNA binding site of the peptidyltransferase center. In Pseudomonas putida (strain ATCC 700007 / DSM 6899 / JCM 31910 / BCRC 17059 / LMG 24140 / F1), this protein is Large ribosomal subunit protein uL6.